The following is a 339-amino-acid chain: Probable geranylgeranyl transferase type-2 subunit beta (339 aa).

6 PFTB repeats span residues 24-65 (IDKH…YLLK), 72-113 (KNEV…IQYD), 120-161 (INSV…SLLK), 168-209 (CEKA…SILN), 216-257 (IDKL…SAID), and 264-306 (NDKL…SLMG). Geranylgeranyl diphosphate-binding positions include 194 to 196 (HAG) and 236 to 248 (RPEK…YSWW). Residues Asp242, Cys244, and His294 each contribute to the Zn(2+) site.

It belongs to the protein prenyltransferase subunit beta family. Heterodimer of an alpha and a beta subunit. It depends on Zn(2+) as a cofactor.

It carries out the reaction geranylgeranyl diphosphate + L-cysteinyl-[protein] = S-geranylgeranyl-L-cysteinyl-[protein] + diphosphate. Functionally, catalyzes the transfer of a geranyl-geranyl moiety from geranyl-geranyl pyrophosphate to both cysteines in Rab proteins with an -XXCC, -XCXC and -CCXX C-terminal. This is Probable geranylgeranyl transferase type-2 subunit beta (rabggtb) from Dictyostelium discoideum (Social amoeba).